Consider the following 172-residue polypeptide: Large ribosomal subunit protein uL10 (172 aa).

It belongs to the universal ribosomal protein uL10 family. Part of the ribosomal stalk of the 50S ribosomal subunit. The N-terminus interacts with L11 and the large rRNA to form the base of the stalk. The C-terminus forms an elongated spine to which L12 dimers bind in a sequential fashion forming a multimeric L10(L12)X complex.

Forms part of the ribosomal stalk, playing a central role in the interaction of the ribosome with GTP-bound translation factors. This Methylorubrum populi (strain ATCC BAA-705 / NCIMB 13946 / BJ001) (Methylobacterium populi) protein is Large ribosomal subunit protein uL10.